Reading from the N-terminus, the 249-residue chain is Uridylate kinase (249 aa).

22–25 (KISG) contacts ATP. The tract at residues 30 to 35 (GTQGFG) is involved in allosteric activation by GTP. Gly64 lines the UMP pocket. ATP is bound by residues Gly65 and Arg69. UMP is bound by residues Asp84 and 145–152 (TGNPYFTT). Positions 173, 179, and 182 each coordinate ATP.

The protein belongs to the UMP kinase family. As to quaternary structure, homohexamer.

The protein resides in the cytoplasm. It catalyses the reaction UMP + ATP = UDP + ADP. The protein operates within pyrimidine metabolism; CTP biosynthesis via de novo pathway; UDP from UMP (UMPK route): step 1/1. With respect to regulation, allosterically activated by GTP. Inhibited by UTP. Functionally, catalyzes the reversible phosphorylation of UMP to UDP. The sequence is that of Uridylate kinase from Ruegeria sp. (strain TM1040) (Silicibacter sp.).